A 619-amino-acid chain; its full sequence is Dihydroxy-acid dehydratase (619 aa).

D81 is a Mg(2+) binding site. C122 is a [2Fe-2S] cluster binding site. Mg(2+)-binding residues include D123 and K124. Residue K124 is modified to N6-carboxylysine. Position 198 (C198) interacts with [2Fe-2S] cluster. Residue E494 coordinates Mg(2+). Residue S520 is the Proton acceptor of the active site.

It belongs to the IlvD/Edd family. Homodimer. Requires [2Fe-2S] cluster as cofactor. The cofactor is Mg(2+).

The enzyme catalyses (2R)-2,3-dihydroxy-3-methylbutanoate = 3-methyl-2-oxobutanoate + H2O. It catalyses the reaction (2R,3R)-2,3-dihydroxy-3-methylpentanoate = (S)-3-methyl-2-oxopentanoate + H2O. The protein operates within amino-acid biosynthesis; L-isoleucine biosynthesis; L-isoleucine from 2-oxobutanoate: step 3/4. Its pathway is amino-acid biosynthesis; L-valine biosynthesis; L-valine from pyruvate: step 3/4. Functions in the biosynthesis of branched-chain amino acids. Catalyzes the dehydration of (2R,3R)-2,3-dihydroxy-3-methylpentanoate (2,3-dihydroxy-3-methylvalerate) into 2-oxo-3-methylpentanoate (2-oxo-3-methylvalerate) and of (2R)-2,3-dihydroxy-3-methylbutanoate (2,3-dihydroxyisovalerate) into 2-oxo-3-methylbutanoate (2-oxoisovalerate), the penultimate precursor to L-isoleucine and L-valine, respectively. The protein is Dihydroxy-acid dehydratase of Neisseria meningitidis serogroup A / serotype 4A (strain DSM 15465 / Z2491).